The chain runs to 718 residues: Ribosome-releasing factor 2, mitochondrial (718 aa).

The transit peptide at 1–29 (MLKCAWQNGPRQSNRWLWQLSNQIWKRSY) directs the protein to the mitochondrion. Residues 31–310 (SKIRNIGILA…AVNSYLPAPE (280 aa)) form the tr-type G domain. Residues 40–47 (AHIDAGKT), 104–108 (DTPGH), and 158–161 (NKMD) each bind GTP.

Belongs to the TRAFAC class translation factor GTPase superfamily. Classic translation factor GTPase family. EF-G/EF-2 subfamily.

The protein resides in the mitochondrion. In terms of biological role, mitochondrial GTPase that mediates the disassembly of ribosomes from messenger RNA at the termination of mitochondrial protein biosynthesis. Not involved in the GTP-dependent ribosomal translocation step during translation elongation. The sequence is that of Ribosome-releasing factor 2, mitochondrial from Drosophila erecta (Fruit fly).